The following is a 291-amino-acid chain: MAKDLDVNESGPPAARDYKDPPPAPFFDMEELRKWPLYRAVIAEFVATLLFLYVSILTVIGYKAQTDATAGGVDCGGVGILGIAWAFGGMIFVLVYCTAGISGGHINPAVTVGLFLARKVSLVRTVLYIVAQCLGAICGCGFVKAFQSSYYTRYGGGANELADGYNKGTGLGAEIIGTFVLVYTVFSATDPKRNARDSHVPVLAPLPIGFAVFMVHLATIPITGTGINPARSFGAAVIYNNEKAWDDQWIFWVGPMIGAAAAAFYHQFILRAAAIKALGSFGSFGSFRSFA.

M1 bears the N-acetylmethionine mark. The tract at residues 1-22 (MAKDLDVNESGPPAARDYKDPP) is disordered. A2 bears the N-acetylalanine; in Probable aquaporin PIP2-4, N-terminally processed mark. Topologically, residues 2 to 39 (AKDLDVNESGPPAARDYKDPPPAPFFDMEELRKWPLYR) are cytoplasmic. Position 3 is an N6,N6-dimethyllysine (K3). Residues 40 to 60 (AVIAEFVATLLFLYVSILTVI) traverse the membrane as a helical segment. Over 61–74 (GYKAQTDATAGGVD) the chain is Extracellular. Residues 75–95 (CGGVGILGIAWAFGGMIFVLV) traverse the membrane as a helical segment. The Cytoplasmic portion of the chain corresponds to 96–125 (YCTAGISGGHINPAVTVGLFLARKVSLVRT). The short motif at 107–109 (NPA) is the NPA 1 element. A helical membrane pass occupies residues 126–146 (VLYIVAQCLGAICGCGFVKAF). Topologically, residues 147 to 167 (QSSYYTRYGGGANELADGYNK) are extracellular. A helical membrane pass occupies residues 168 to 188 (GTGLGAEIIGTFVLVYTVFSA). Residues 189-201 (TDPKRNARDSHVP) are Cytoplasmic-facing. A helical transmembrane segment spans residues 202–222 (VLAPLPIGFAVFMVHLATIPI). Residues 223 to 249 (TGTGINPARSFGAAVIYNNEKAWDDQW) are Extracellular-facing. Positions 228–230 (NPA) match the NPA 2 motif. A helical membrane pass occupies residues 250-270 (IFWVGPMIGAAAAAFYHQFIL). Over 271 to 291 (RAAAIKALGSFGSFGSFRSFA) the chain is Cytoplasmic. 3 positions are modified to phosphoserine: S283, S286, and S289.

The protein belongs to the MIP/aquaporin (TC 1.A.8) family. PIP (TC 1.A.8.11) subfamily. In terms of tissue distribution, expressed in roots.

It is found in the cell membrane. In terms of biological role, aquaporins facilitate the transport of water and small neutral solutes across cell membranes. The chain is Probable aquaporin PIP2-4 (PIP2-4) from Arabidopsis thaliana (Mouse-ear cress).